A 216-amino-acid chain; its full sequence is Adenylate kinase (216 aa).

Position 10-15 (10-15 (GAGKGT)) interacts with ATP. The interval 30 to 59 (STGDMLRAAVSAQTEVGKRAKAVMDAGKLV) is NMP. Residues Thr-31, Arg-36, 57 to 59 (KLV), 85 to 88 (GFPR), and Gln-92 each bind AMP. Positions 126-163 (GRYTCANCGTGYHDENLKPKVEGVCDKCGSTHFKRRPD) are LID. Residue Arg-127 coordinates ATP. Residues Cys-130, Cys-133, Cys-150, and Cys-153 each contribute to the Zn(2+) site. The AMP site is built by Arg-160 and Arg-172. Ala-200 provides a ligand contact to ATP.

Belongs to the adenylate kinase family. As to quaternary structure, monomer.

It localises to the cytoplasm. The catalysed reaction is AMP + ATP = 2 ADP. Its pathway is purine metabolism; AMP biosynthesis via salvage pathway; AMP from ADP: step 1/1. In terms of biological role, catalyzes the reversible transfer of the terminal phosphate group between ATP and AMP. Plays an important role in cellular energy homeostasis and in adenine nucleotide metabolism. In Allorhizobium ampelinum (strain ATCC BAA-846 / DSM 112012 / S4) (Agrobacterium vitis (strain S4)), this protein is Adenylate kinase.